A 479-amino-acid polypeptide reads, in one-letter code: Phosphatidylinositol 4-kinase type 2-alpha (479 aa).

An N-acetylmethionine modification is found at M1. The segment at 1–58 is disordered; that stretch reads MDETSPLVSPERAQPPEYTFPSGSGAHFPQVPGGAVRVAAAAGSGPSPPCSPGHDRER. S5, S9, S44, S47, and S51 each carry phosphoserine. The span at 31–45 shows a compositional bias: low complexity; sequence VPGGAVRVAAAAGSG. The PI3K/PI4K catalytic domain occupies 124–453; it reads SIYPERIYQG…VQMPPVIVET (330 aa). The G-loop stretch occupies residues 130-136; sequence IYQGSSG. ATP is bound by residues 131–137 and K152; that span reads YQGSSGS. The tract at residues 157-159 is important for substrate binding; that stretch reads EPY. The tract at residues 165–178 is important for interaction with membranes; it reads KWTKWLQKLCCPCC. S-palmitoyl cysteine attachment occurs at residues C174, C175, C177, and C178. Position 261 to 264 (261 to 264) interacts with ATP; it reads QLFV. Residues 268-276 are important for interaction with membranes; that stretch reads KDADYWLRR. The catalytic loop stretch occupies residues 305–313; the sequence is RNTDRGNDN. The segment at 344 to 364 is activation loop; that stretch reads AIDNGLAFPLKHPDSWRAYPF. D346 serves as a coordination point for ATP. Positions 359-368 are important for interaction with membranes; that stretch reads WRAYPFYWAW. The residue at position 462 (S462) is a Phosphoserine.

Belongs to the PI3/PI4-kinase family. Type II PI4K subfamily. Associates with the BLOC-1 and the AP-3 complexes; the BLOC-1 complex is required for optimal binding of PI4K2A to the AP-3 complex. Interacts with BLOC1S5 and DTNBP1. Interacts with ITCH. Interacts with FOS; this interaction may enhance phosphatidylinositol phosphorylation activity. Interacts with ATG9A. Palmitoylated by ZDHHC3 and ZDHHC7 in the CCPCC motif. Palmitoylation is cholesterol-dependent, and required for TGN localization. Post-translationally, ubiquitinated by ITCH; this does not lead to proteasomal degradation. Detected in brain (at protein level).

The protein resides in the golgi apparatus. It is found in the trans-Golgi network membrane. The protein localises to the membrane raft. It localises to the endosome. Its subcellular location is the endosome membrane. The protein resides in the cytoplasmic vesicle. It is found in the cell projection. The protein localises to the dendrite. It localises to the presynaptic cell membrane. Its subcellular location is the synapse. The protein resides in the synaptosome. It is found in the mitochondrion. The protein localises to the membrane. It localises to the cell membrane. Its subcellular location is the perikaryon. The protein resides in the neuron projection. It catalyses the reaction a 1,2-diacyl-sn-glycero-3-phospho-(1D-myo-inositol) + ATP = a 1,2-diacyl-sn-glycero-3-phospho-(1D-myo-inositol 4-phosphate) + ADP + H(+). Functionally, membrane-bound phosphatidylinositol-4 kinase (PI4-kinase) that catalyzes the phosphorylation of phosphatidylinositol (PI) to phosphatidylinositol 4-phosphate (PI4P), a lipid that plays important roles in endocytosis, Golgi function, protein sorting and membrane trafficking and is required for prolonged survival of neurons. Besides, phosphorylation of phosphatidylinositol (PI) to phosphatidylinositol 4-phosphate (PI4P) is the first committed step in the generation of phosphatidylinositol 4,5-bisphosphate (PIP2), a precursor of the second messenger inositol 1,4,5-trisphosphate (InsP3). The chain is Phosphatidylinositol 4-kinase type 2-alpha (Pi4k2a) from Mus musculus (Mouse).